The sequence spans 1527 residues: DNA (cytosine-5)-methyltransferase 1A (1527 aa).

2 disordered regions span residues 1 to 62 and 661 to 718; these read MAKS…PKRA and GDTK…KEIK. 2 stretches are compositionally biased toward acidic residues: residues 25-36 and 664-692; these read EPVENENLESEF and KEED…EVNV. Basic and acidic residues predominate over residues 709 to 718; the sequence is SSADTRKEIK. 2 consecutive BAH domains span residues 742 to 874 and 910 to 1049; these read LSIS…FSLP and ITYN…KQLP. The SAM-dependent MTase C5-type domain maps to 1092-1526; it reads LATLDIFAGC…RKLKQAIDAK (435 aa). Residue C1197 is part of the active site.

This sequence belongs to the class I-like SAM-binding methyltransferase superfamily. C5-methyltransferase family. Expressed in roots and inflorescences. Expressed in roots, panicles, anthers, pistils, endosperm and imbibed embryos. Expressed in tissues containing actively replicating and dividing cells, such as shoot and root meristems.

The protein resides in the nucleus. The enzyme catalyses a 2'-deoxycytidine in DNA + S-adenosyl-L-methionine = a 5-methyl-2'-deoxycytidine in DNA + S-adenosyl-L-homocysteine + H(+). Its function is as follows. Probably methylates CpG residues and maintains DNA methylation. May be involved in methylation-dependent gene silencing. May play a minor role in the maintenance of DNA methylation. In Oryza sativa subsp. japonica (Rice), this protein is DNA (cytosine-5)-methyltransferase 1A.